Reading from the N-terminus, the 188-residue chain is Adenylate kinase (188 aa).

12–17 serves as a coordination point for ATP; that stretch reads GSGKTT. The segment at 33–62 is NMP; it reads STGDLLRAEVASGSELGKKIDSFISKGNLV. AMP is bound by residues Thr34, Arg39, 60–62, 87–90, and Gln94; these read NLV and GYPR. Residues 129-135 are LID; that stretch reads GRARGAD. Arg130 serves as a coordination point for ATP. Positions 132 and 144 each coordinate AMP. Arg172 lines the ATP pocket.

This sequence belongs to the adenylate kinase family. As to quaternary structure, monomer.

Its subcellular location is the cytoplasm. It catalyses the reaction AMP + ATP = 2 ADP. The protein operates within purine metabolism; AMP biosynthesis via salvage pathway; AMP from ADP: step 1/1. Its function is as follows. Catalyzes the reversible transfer of the terminal phosphate group between ATP and AMP. Plays an important role in cellular energy homeostasis and in adenine nucleotide metabolism. The sequence is that of Adenylate kinase from Campylobacter curvus (strain 525.92).